We begin with the raw amino-acid sequence, 292 residues long: 33 kDa chaperonin (292 aa).

2 cysteine pairs are disulfide-bonded: C230–C232 and C263–C266.

The protein belongs to the HSP33 family. In terms of processing, under oxidizing conditions two disulfide bonds are formed involving the reactive cysteines. Under reducing conditions zinc is bound to the reactive cysteines and the protein is inactive.

The protein resides in the cytoplasm. Redox regulated molecular chaperone. Protects both thermally unfolding and oxidatively damaged proteins from irreversible aggregation. Plays an important role in the bacterial defense system toward oxidative stress. This chain is 33 kDa chaperonin, found in Shigella dysenteriae serotype 1 (strain Sd197).